The following is a 598-amino-acid chain: Elongation factor 4 (598 aa).

In terms of domain architecture, tr-type G spans 5 to 187 (SHIRNFSIIA…RLVATIPAPT (183 aa)). GTP contacts are provided by residues 17 to 22 (DHGKST) and 134 to 137 (NKMD).

The protein belongs to the TRAFAC class translation factor GTPase superfamily. Classic translation factor GTPase family. LepA subfamily.

The protein resides in the cell inner membrane. It carries out the reaction GTP + H2O = GDP + phosphate + H(+). In terms of biological role, required for accurate and efficient protein synthesis under certain stress conditions. May act as a fidelity factor of the translation reaction, by catalyzing a one-codon backward translocation of tRNAs on improperly translocated ribosomes. Back-translocation proceeds from a post-translocation (POST) complex to a pre-translocation (PRE) complex, thus giving elongation factor G a second chance to translocate the tRNAs correctly. Binds to ribosomes in a GTP-dependent manner. In Pseudomonas syringae pv. syringae (strain B728a), this protein is Elongation factor 4.